The primary structure comprises 166 residues: MAHIEKQAGELQEKLIAVNRVSKTVKGGRIFSFTALTVVGDGNGRVGFGYGKAREVPAAIQKAMEKARRNMMNVALNNGTLQHPVKGAHTGSRVFMQPASEGTGIIAGGAMRAVLEVAGVHNVLAKAYGSTNPINVVRATIDGLANMKSPEMVAAKRGKSVEEILG.

The region spanning 11 to 74 is the S5 DRBM domain; it reads LQEKLIAVNR…EKARRNMMNV (64 aa).

This sequence belongs to the universal ribosomal protein uS5 family. In terms of assembly, part of the 30S ribosomal subunit. Contacts proteins S4 and S8.

With S4 and S12 plays an important role in translational accuracy. Functionally, located at the back of the 30S subunit body where it stabilizes the conformation of the head with respect to the body. The protein is Small ribosomal subunit protein uS5 of Pectobacterium atrosepticum (strain SCRI 1043 / ATCC BAA-672) (Erwinia carotovora subsp. atroseptica).